The primary structure comprises 447 residues: MIKITKGLDLPIAGMPLQQISPAPAVKRVALLGEEYVGMRPAMAVKEGDRVKKGQILFEDKKIPGVCFTAPASGIVSAIHRGERRVLQSVVIDIEGNDAVAFTRYAADALAELPRDTVQQQLLASGQWTALRTRPFSKTPLPGSTPAAIFVNAMDTNPLAAEPQPIILAERAAFDAGLTVLTRLTDGKVHVCQPSGGKLGGHPLGQVCFNQFSGPHPAGLPGTHIHFLEPVSLNKQVWHLNYQDAIAIGKLFLDGELYCERIIALGGPQVTSPRLVKTTLGASLEDLLAGELQEGENRVISGSVLSGARAHGPHAFLGRFHLQVSVVKEGREKELFGWVMPGKEKFSITRTTLGHFFKRKRFHFSTDTNGGERAMVPIGNYERVMPLDILPTILLRDLLAGDTDSAQALGCLELDEEDLALCTYVCPGKYEYGPALRSVLTRIEQEG.

This sequence belongs to the NqrA family. As to quaternary structure, composed of six subunits; NqrA, NqrB, NqrC, NqrD, NqrE and NqrF.

It carries out the reaction a ubiquinone + n Na(+)(in) + NADH + H(+) = a ubiquinol + n Na(+)(out) + NAD(+). In terms of biological role, NQR complex catalyzes the reduction of ubiquinone-1 to ubiquinol by two successive reactions, coupled with the transport of Na(+) ions from the cytoplasm to the periplasm. NqrA to NqrE are probably involved in the second step, the conversion of ubisemiquinone to ubiquinol. This chain is Na(+)-translocating NADH-quinone reductase subunit A, found in Klebsiella pneumoniae subsp. pneumoniae (strain ATCC 700721 / MGH 78578).